The primary structure comprises 508 residues: Maturase K (508 aa).

Belongs to the intron maturase 2 family. MatK subfamily.

The protein resides in the plastid. Its subcellular location is the chloroplast. Its function is as follows. Usually encoded in the trnK tRNA gene intron. Probably assists in splicing its own and other chloroplast group II introns. The polypeptide is Maturase K (Manilkara zapota (Sapodilla plum)).